The chain runs to 140 residues: Small ribosomal subunit protein uS12 (140 aa).

Proline 59 bears the Hydroxyproline mark.

This sequence belongs to the universal ribosomal protein uS12 family.

This chain is Small ribosomal subunit protein uS12 (RPS23), found in Encephalitozoon cuniculi (strain GB-M1) (Microsporidian parasite).